The primary structure comprises 373 residues: Securin (373 aa).

Positions 1–10 (MMPANEDKEN) are enriched in basic and acidic residues. Positions 1–27 (MMPANEDKENNIVYTGNESSGINFPQT) are disordered. A compositionally biased stretch (polar residues) spans 12-26 (IVYTGNESSGINFPQ). The D-box motif lies at 85-88 (RLPL). Residues 177-278 (ADSGKNEESS…LPYVPEGYSP (102 aa)) are disordered. A phosphoserine mark is found at Ser-185, Ser-186, Ser-212, and Ser-213. Over residues 185 to 194 (SSDDDEGNED) the composition is skewed to acidic residues. Positions 225 to 235 (LFNEQGGLQQL) are enriched in low complexity. Residues 240-256 (TKNEQKTKNDKSDKTDD) show a composition bias toward basic and acidic residues. Ser-277 is subject to Phosphoserine. Ser-292 bears the Phosphoserine; by CDC28 mark.

The protein belongs to the securin family. In terms of assembly, interacts with the caspase-like ESP1, and prevents its protease activity probably by covering its active site. Interacts with CDC20. Phosphorylated by CDC28. The phosphorylation may be important for ESP1 localization to the nucleus. In terms of processing, ubiquitinated by the anaphase promoting complex (APC) at the onset of anaphase, conducting to its degradation.

The protein localises to the cytoplasm. Its subcellular location is the nucleus. Functionally, regulatory protein, which plays a central role in chromosome stability. Probably acts by blocking the action of key proteins. During the mitosis, it blocks Separase/ESP1 function, preventing the proteolysis of the cohesin complex and the subsequent segregation of the chromosomes. At the onset of anaphase, it is ubiquitinated, conducting to its destruction and to the liberation of ESP1. This Saccharomyces cerevisiae (strain ATCC 204508 / S288c) (Baker's yeast) protein is Securin (PDS1).